The sequence spans 120 residues: Myohemerythrin (120 aa).

Residues H26, H56, E60, H75, H79, H108, and D113 each coordinate Fe cation.

This sequence belongs to the hemerythrin family.

Myohemerythrin is an oxygen-binding protein found in the retractor muscles of certain worms. The oxygen-binding site contains two iron atoms. The protein is Myohemerythrin of Sipunculus nudus (Sipunculan worm).